A 179-amino-acid chain; its full sequence is Ribulose bisphosphate carboxylase small subunit, chloroplastic 2 (179 aa).

A chloroplast-targeting transit peptide spans M1 to Q58.

Belongs to the RuBisCO small chain family. Heterohexadecamer of 8 large and 8 small subunits.

Its subcellular location is the plastid. It is found in the chloroplast. In terms of biological role, ruBisCO catalyzes two reactions: the carboxylation of D-ribulose 1,5-bisphosphate, the primary event in carbon dioxide fixation, as well as the oxidative fragmentation of the pentose substrate. Both reactions occur simultaneously and in competition at the same active site. Although the small subunit is not catalytic it is essential for maximal activity. This Fritillaria agrestis (Stinkbells) protein is Ribulose bisphosphate carboxylase small subunit, chloroplastic 2.